We begin with the raw amino-acid sequence, 259 residues long: Protein YIF1B (259 aa).

M1 carries the N-acetylmethionine modification. The interval 1–61 (MHATGLAAPA…QPSPGSLGYP (61 aa)) is disordered. At 9–153 (PAGTPRLRKW…APRFDINAPD (145 aa)) the chain is on the cytoplasmic side. T12 carries the post-translational modification Phosphothreonine. Basic residues predominate over residues 14–24 (RLRKWPSKRRV). The residue at position 64 (S64) is a Phosphoserine. The chain crosses the membrane as a helical span at residues 154–174 (LYIPAMAFITYILVAGLALGT). Over 175–186 (QDRMIGGVLTGL) the chain is Extracellular. Residues 187 to 207 (LFGKIGYYLVLAWCCVSIFVF) form a helical membrane-spanning segment. The Cytoplasmic segment spans residues 208 to 237 (MIRTLRLKILAQAAAEGVPVRGARNQLRMY). A helical membrane pass occupies residues 238-258 (LTMAVAAAQPVLMYWLTFHLV). A topological domain (extracellular) is located at residue R259.

Belongs to the YIF1 family. In terms of assembly, interacts with HTR1A (via C-terminus). Interacts with ABCB9 (via TMD0); this interaction allows (but is not essential) the ER-to-Golgi trafficking and strongly depends on a salt bridge within TMD0. As to expression, highly expressed in brain. Expressed in heart, kidney, and lung and lower levels in spleen, muscle, and intestine (at protein level). Expressed in serotoninergic neurons (at protein level).

The protein localises to the endoplasmic reticulum membrane. The protein resides in the golgi apparatus membrane. It is found in the endoplasmic reticulum-Golgi intermediate compartment membrane. Functions in endoplasmic reticulum to Golgi vesicle-mediated transport and regulates the proper organization of the endoplasmic reticulum and the Golgi. Plays a key role in targeting to neuronal dendrites receptors such as HTR1A. Plays also a role in primary cilium and sperm flagellum assembly probably through protein transport to these compartments. This chain is Protein YIF1B, found in Rattus norvegicus (Rat).